A 512-amino-acid polypeptide reads, in one-letter code: Centrosomal protein CCDC61 (512 aa).

Met1 carries the post-translational modification N-acetylmethionine. The tract at residues 1–142 is head domain; that stretch reads MEQPAGLQVD…PLPLPYQGKP (142 aa). Coiled-coil stretches lie at residues 176–203 and 246–273; these read WHLREQVTRLASEKRELEAQLGRSREEA and RRLAKELEEVKASERNLRARLKTLNCEL. Thr282 carries the post-translational modification Phosphothreonine. Disordered stretches follow at residues 282 to 415 and 430 to 472; these read TLPA…SFRS and SQSV…HLAS. The span at 287–300 shows a compositional bias: basic and acidic residues; the sequence is AREDRALSSRERST. Phosphoserine is present on residues Ser328, Ser330, Ser372, and Ser375. Low complexity predominate over residues 406 to 415; that stretch reads RSSSVDSFRS. Phosphoserine is present on residues Ser447 and Ser473.

It belongs to the CCDC61 family. As to quaternary structure, forms homodimers (via head domain). Interacts with CEP170. Interacts with PCM1 and CEP131. Binds tubulin.

Its subcellular location is the cytoplasm. The protein resides in the cytoskeleton. It localises to the microtubule organizing center. It is found in the centrosome. The protein localises to the centriolar satellite. Its subcellular location is the cilium basal body. Microtubule-binding centrosomal protein required for centriole cohesion, independently of the centrosome-associated protein/CEP250 and rootletin/CROCC linker. In interphase, required for anchoring microtubule at the mother centriole subdistal appendages and for centrosome positioning. During mitosis, may be involved in spindle assembly and chromatin alignment by regulating the organization of spindle microtubules into a symmetrical structure. Plays a non-essential role in ciliogenesis. The chain is Centrosomal protein CCDC61 from Rattus norvegicus (Rat).